Reading from the N-terminus, the 89-residue chain is Defensin-like protein 108 (89 aa).

The signal sequence occupies residues 1–20 (MTSLIAFLFTVLVIVSSVHC). 4 disulfide bridges follow: cysteine 39/cysteine 81, cysteine 49/cysteine 71, cysteine 57/cysteine 79, and cysteine 61/cysteine 80.

It belongs to the DEFL family.

It is found in the secreted. In Arabidopsis thaliana (Mouse-ear cress), this protein is Defensin-like protein 108 (LCR51).